Consider the following 258-residue polypeptide: Thymidylate synthase (258 aa).

Position 21 (Arg21) interacts with dUMP. His51 serves as a coordination point for (6R)-5,10-methylene-5,6,7,8-tetrahydrofolate. 121–122 (RR) contacts dUMP. Residue Cys141 is the Nucleophile of the active site. Residues 161-164 (RSAD), Asn172, and 202-204 (HLY) contribute to the dUMP site. A (6R)-5,10-methylene-5,6,7,8-tetrahydrofolate-binding site is contributed by Asp164. (6R)-5,10-methylene-5,6,7,8-tetrahydrofolate is bound at residue Ala257.

This sequence belongs to the thymidylate synthase family. Bacterial-type ThyA subfamily. In terms of assembly, homodimer.

The protein localises to the cytoplasm. It catalyses the reaction dUMP + (6R)-5,10-methylene-5,6,7,8-tetrahydrofolate = 7,8-dihydrofolate + dTMP. It participates in pyrimidine metabolism; dTTP biosynthesis. In terms of biological role, catalyzes the reductive methylation of 2'-deoxyuridine-5'-monophosphate (dUMP) to 2'-deoxythymidine-5'-monophosphate (dTMP) while utilizing 5,10-methylenetetrahydrofolate (mTHF) as the methyl donor and reductant in the reaction, yielding dihydrofolate (DHF) as a by-product. This enzymatic reaction provides an intracellular de novo source of dTMP, an essential precursor for DNA biosynthesis. This is Thymidylate synthase from Dichelobacter nodosus (strain VCS1703A).